The following is a 230-amino-acid chain: tRNA pseudouridine synthase B (230 aa).

Residue Asp-45 is the Nucleophile of the active site.

It belongs to the pseudouridine synthase TruB family. Type 1 subfamily.

It catalyses the reaction uridine(55) in tRNA = pseudouridine(55) in tRNA. Responsible for synthesis of pseudouridine from uracil-55 in the psi GC loop of transfer RNAs. In Endomicrobium trichonymphae, this protein is tRNA pseudouridine synthase B.